A 62-amino-acid polypeptide reads, in one-letter code: Cytochrome b-c1 complex subunit 6-2, mitochondrial (62 aa).

Intrachain disulfides connect C17–C59 and C31–C45.

It belongs to the UQCRH/QCR6 family. Component of the ubiquinol-cytochrome c oxidoreductase (cytochrome b-c1 complex, complex III, CIII), a multisubunit enzyme composed of 10 subunits. The complex is composed of 3 respiratory subunits cytochrome b (MT-CYB), cytochrome c1 (CYC1-1 or CYC1-2) and Rieske protein (UCR1-1 or UCR1-2), 2 core protein subunits MPPalpha1 (or MPPalpha2) and MPPB, and 5 low-molecular weight protein subunits QCR7-1 (or QCR7-2), UCRQ-1 (or UCRQ-2), QCR9, UCRY and probably QCR6-1 (or QCR6-2). The complex exists as an obligatory dimer and forms supercomplexes (SCs) in the inner mitochondrial membrane with NADH-ubiquinone oxidoreductase (complex I, CI), resulting in different assemblies (supercomplexes SCI(1)III(2) and SCI(2)III(4)).

It localises to the mitochondrion inner membrane. Component of the ubiquinol-cytochrome c oxidoreductase, a multisubunit transmembrane complex that is part of the mitochondrial electron transport chain which drives oxidative phosphorylation. The respiratory chain contains 3 multisubunit complexes succinate dehydrogenase (complex II, CII), ubiquinol-cytochrome c oxidoreductase (cytochrome b-c1 complex, complex III, CIII) and cytochrome c oxidase (complex IV, CIV), that cooperate to transfer electrons derived from NADH and succinate to molecular oxygen, creating an electrochemical gradient over the inner membrane that drives transmembrane transport and the ATP synthase. The cytochrome b-c1 complex catalyzes electron transfer from ubiquinol to cytochrome c, linking this redox reaction to translocation of protons across the mitochondrial inner membrane, with protons being carried across the membrane as hydrogens on the quinol. In the process called Q cycle, 2 protons are consumed from the matrix, 4 protons are released into the intermembrane space and 2 electrons are passed to cytochrome c. This chain is Cytochrome b-c1 complex subunit 6-2, mitochondrial (QCR6-2), found in Arabidopsis thaliana (Mouse-ear cress).